Here is a 303-residue protein sequence, read N- to C-terminus: Peroxisomal trans-2-enoyl-CoA reductase (303 aa).

Residue 23–47 participates in NADP(+) binding; sequence VTGGATGIGKAIVKELLELGSNVVI. Lysine 32 carries the N6-succinyllysine modification. Phosphoserine is present on serine 49. Tyrosine 179 serves as the catalytic Proton acceptor. Tyrosine 179 is subject to Phosphotyrosine. The Microbody targeting signal motif lies at 301–303; that stretch reads AKL.

This sequence belongs to the short-chain dehydrogenases/reductases (SDR) family. Interacts with PEX5, probably required to target it into peroxisomes.

The protein resides in the peroxisome. It carries out the reaction a (2E)-enoyl-CoA + NADPH + H(+) = a 2,3-saturated acyl-CoA + NADP(+). The enzyme catalyses (2E)-hexenoyl-CoA + NADPH + H(+) = hexanoyl-CoA + NADP(+). It catalyses the reaction (2E)-octenoyl-CoA + NADPH + H(+) = octanoyl-CoA + NADP(+). The catalysed reaction is (2E)-decenoyl-CoA + NADPH + H(+) = decanoyl-CoA + NADP(+). It carries out the reaction (2E)-dodecenoyl-CoA + NADPH + H(+) = dodecanoyl-CoA + NADP(+). The enzyme catalyses (2E)-tetradecenoyl-CoA + NADPH + H(+) = tetradecanoyl-CoA + NADP(+). Its pathway is lipid metabolism; fatty acid biosynthesis. Participates in chain elongation of fatty acids. Catalyzes the reduction of trans-2-enoyl-CoAs of varying chain lengths from 6:1 to 16:1, having maximum activity with 10:1 CoA. Has no 2,4-dienoyl-CoA reductase activity. The sequence is that of Peroxisomal trans-2-enoyl-CoA reductase (PECR) from Pongo abelii (Sumatran orangutan).